The following is a 607-amino-acid chain: Discoidin-inducing complex subunit B (607 aa).

Positions 1 to 19 (MNKKIIILIYLIFIKSIVG) are cleaved as a signal peptide. Topologically, residues 20–554 (QNPVWIGGSG…LGTDGISKGS (535 aa)) are extracellular. 10 N-linked (GlcNAc...) asparagine glycosylation sites follow: Asn-75, Asn-161, Asn-215, Asn-276, Asn-277, Asn-307, Asn-324, Asn-453, Asn-477, and Asn-527. A helical transmembrane segment spans residues 555-575 (LAGISVSMVALACFVSLGVWW). Residues 576–607 (KTSKKNDQRNDSQVLTNFSQNKSDDIDVERKL) lie on the Cytoplasmic side of the membrane.

In terms of assembly, forms a complex with psiF/dicA.

The protein resides in the membrane. It is found in the secreted. In terms of biological role, component of a complex that acts as a quorum sensing protein regulating discoidin gene expression during growth and development. Its function in the complex is unclear as it has no ability to induce discoidin during growth and development by itself. This is Discoidin-inducing complex subunit B (dicB) from Dictyostelium discoideum (Social amoeba).